A 124-amino-acid polypeptide reads, in one-letter code: Late histone H2B.2.2 (124 aa).

The interval 1–32 is disordered; sequence MPAKQTSGKGAKKAGKAKGRPSGASKTRRRKR. Over residues 10-19 the composition is skewed to basic residues; that stretch reads GAKKAGKAKG. S111 carries an O-linked (GlcNAc) serine glycan. A Glycyl lysine isopeptide (Lys-Gly) (interchain with G-Cter in ubiquitin) cross-link involves residue K119.

This sequence belongs to the histone H2B family. In terms of assembly, the nucleosome is a histone octamer containing two molecules each of H2A, H2B, H3 and H4 assembled in one H3-H4 heterotetramer and two H2A-H2B heterodimers. The octamer wraps approximately 147 bp of DNA. Monoubiquitination of Lys-119 gives a specific tag for epigenetic transcriptional activation and is also prerequisite for histone H3 'Lys-4' and 'Lys-79' methylation. In terms of processing, glcNAcylation at Ser-111 promotes monoubiquitination of Lys-119. It fluctuates in response to extracellular glucose, and associates with transcribed genes.

Its subcellular location is the nucleus. The protein resides in the chromosome. Its function is as follows. Core component of nucleosome. Nucleosomes wrap and compact DNA into chromatin, limiting DNA accessibility to the cellular machineries which require DNA as a template. Histones thereby play a central role in transcription regulation, DNA repair, DNA replication and chromosomal stability. DNA accessibility is regulated via a complex set of post-translational modifications of histones, also called histone code, and nucleosome remodeling. The protein is Late histone H2B.2.2 of Psammechinus miliaris (Green sea urchin).